The following is a 182-amino-acid chain: MEMASHPAVHPVALPPPYQAVGPPAPPAVRINDFPGSPGTLMGLALRFAQLGFALTALCIMVSIVGFSSVTAFCFLVAAMVLQCIWSLCLGVLDCYALLTKRSLRNSLILSFFVVGDWITSTMTFAGACAAAGITVLIDNDLNQCGPNHCNRFEAAAAMAFMSWVITTISFFLSFWILVTCR.

At 1–47 (MEMASHPAVHPVALPPPYQAVGPPAPPAVRINDFPGSPGTLMGLALR) the chain is on the cytoplasmic side. The chain crosses the membrane as a helical span at residues 48–68 (FAQLGFALTALCIMVSIVGFS). The Extracellular segment spans residues 69 to 72 (SVTA). A helical membrane pass occupies residues 73–93 (FCFLVAAMVLQCIWSLCLGVL). Topologically, residues 94-117 (DCYALLTKRSLRNSLILSFFVVGD) are cytoplasmic. Residues 118–138 (WITSTMTFAGACAAAGITVLI) traverse the membrane as a helical segment. The Extracellular portion of the chain corresponds to 139–158 (DNDLNQCGPNHCNRFEAAAA). The helical transmembrane segment at 159–179 (MAFMSWVITTISFFLSFWILV) threads the bilayer. Over 180 to 182 (TCR) the chain is Cytoplasmic.

It belongs to the Casparian strip membrane proteins (CASP) family. In terms of assembly, homodimer and heterodimers.

It localises to the cell membrane. This chain is CASP-like protein 5A1, found in Physcomitrium patens (Spreading-leaved earth moss).